Reading from the N-terminus, the 1409-residue chain is DNA-directed RNA polymerase subunit beta' (1409 aa).

Residues C70, C72, C85, and C88 each contribute to the Zn(2+) site. The Mg(2+) site is built by D458, D460, and D462. Zn(2+) is bound by residues C813, C887, C894, and C897.

Belongs to the RNA polymerase beta' chain family. The RNAP catalytic core consists of 2 alpha, 1 beta, 1 beta' and 1 omega subunit. When a sigma factor is associated with the core the holoenzyme is formed, which can initiate transcription. The cofactor is Mg(2+). It depends on Zn(2+) as a cofactor.

The catalysed reaction is RNA(n) + a ribonucleoside 5'-triphosphate = RNA(n+1) + diphosphate. DNA-dependent RNA polymerase catalyzes the transcription of DNA into RNA using the four ribonucleoside triphosphates as substrates. This is DNA-directed RNA polymerase subunit beta' from Acidovorax ebreus (strain TPSY) (Diaphorobacter sp. (strain TPSY)).